The chain runs to 397 residues: Elongation factor Tu (397 aa).

The tr-type G domain maps to 10 to 207 (KPHCNIGTIG…AVDEYIPQPE (198 aa)). A G1 region spans residues 19-26 (GHVDHGKT). Residue 19-26 (GHVDHGKT) coordinates GTP. Thr-26 lines the Mg(2+) pocket. Residues 61-65 (GITIS) form a G2 region. Positions 82–85 (DCPG) are G3. GTP is bound by residues 82 to 86 (DCPGH) and 137 to 140 (NKVD). The interval 137-140 (NKVD) is G4. The G5 stretch occupies residues 175 to 177 (SAL).

Belongs to the TRAFAC class translation factor GTPase superfamily. Classic translation factor GTPase family. EF-Tu/EF-1A subfamily. Monomer.

It localises to the cytoplasm. The enzyme catalyses GTP + H2O = GDP + phosphate + H(+). In terms of biological role, GTP hydrolase that promotes the GTP-dependent binding of aminoacyl-tRNA to the A-site of ribosomes during protein biosynthesis. This Zymomonas mobilis subsp. mobilis (strain ATCC 31821 / ZM4 / CP4) protein is Elongation factor Tu.